Consider the following 209-residue polypeptide: Small ribosomal subunit protein mS23 (209 aa).

It belongs to the mitochondrion-specific ribosomal protein mS23 family. Component of the mitochondrial small ribosomal subunit.

It is found in the mitochondrion. This chain is Small ribosomal subunit protein mS23 (rsm25), found in Sclerotinia sclerotiorum (strain ATCC 18683 / 1980 / Ss-1) (White mold).